We begin with the raw amino-acid sequence, 307 residues long: Isethionate sulfite-lyase activating enzyme (307 aa).

The 286-residue stretch at 22-307 (HDGPGIRTVV…EAVVAQTADS (286 aa)) folds into the Radical SAM core domain. 11 residues coordinate [4Fe-4S] cluster: Cys36, Cys40, Cys43, Cys62, Cys68, Cys71, Cys75, Cys95, Cys98, Cys102, and Cys106. Residue 42–44 (WCS) coordinates S-adenosyl-L-methionine. 4Fe-4S ferredoxin-type domains lie at 53–85 (VELA…RAED) and 86–117 (DTIS…YGAH). S-adenosyl-L-methionine-binding positions include Gly146, 195–197 (DIK), and His268.

Belongs to the organic radical-activating enzymes family. As to quaternary structure, monomer. [4Fe-4S] cluster serves as cofactor.

The catalysed reaction is glycyl-[protein] + reduced [flavodoxin] + S-adenosyl-L-methionine = glycin-2-yl radical-[protein] + semiquinone [flavodoxin] + 5'-deoxyadenosine + L-methionine + H(+). The protein operates within organosulfur degradation; alkanesulfonate degradation. Its function is as follows. Involved in an anaerobic respiration pathway that converts the sulfonate isethionate (2-hydroxyethanesulfonate) to ammonia, acetate and sulfide. Catalyzes activation of the isethionate sulfite-lyase IseG under anaerobic conditions by generation of an organic free radical on a glycine residue, via a homolytic cleavage of S-adenosyl-L-methionine (SAM). This chain is Isethionate sulfite-lyase activating enzyme, found in Nitratidesulfovibrio vulgaris (strain ATCC 29579 / DSM 644 / CCUG 34227 / NCIMB 8303 / VKM B-1760 / Hildenborough) (Desulfovibrio vulgaris).